The primary structure comprises 351 residues: Fe(3+) ions import ATP-binding protein FbpC (351 aa).

An ABC transporter domain is found at 9 to 239 (LVLKNINKTF…PNSLFLANFM (231 aa)). Residue 41-48 (GPSGCGKT) coordinates ATP.

Belongs to the ABC transporter superfamily. Fe(3+) ion importer (TC 3.A.1.10) family. In terms of assembly, the complex is composed of two ATP-binding proteins (FbpC), two transmembrane proteins (FbpB) and a solute-binding protein (FbpA).

The protein localises to the cell inner membrane. It carries out the reaction Fe(3+)(out) + ATP + H2O = Fe(3+)(in) + ADP + phosphate + H(+). Its function is as follows. Part of the ABC transporter complex FbpABC involved in Fe(3+) ions import. Responsible for energy coupling to the transport system. The sequence is that of Fe(3+) ions import ATP-binding protein FbpC from Mannheimia succiniciproducens (strain KCTC 0769BP / MBEL55E).